The primary structure comprises 396 residues: Elongation factor Tu (396 aa).

Positions 10-206 (KPHVNVGTIG…ALDSYIPTPE (197 aa)) constitute a tr-type G domain. The interval 19-26 (GHVDHGKT) is G1. Residue 19–26 (GHVDHGKT) participates in GTP binding. Thr26 provides a ligand contact to Mg(2+). The tract at residues 60–64 (GITIN) is G2. The segment at 81 to 84 (DCPG) is G3. GTP-binding positions include 81 to 85 (DCPGH) and 136 to 139 (NKCD). The G4 stretch occupies residues 136–139 (NKCD). Positions 174-176 (SAL) are G5.

The protein belongs to the TRAFAC class translation factor GTPase superfamily. Classic translation factor GTPase family. EF-Tu/EF-1A subfamily. Monomer.

Its subcellular location is the cytoplasm. The catalysed reaction is GTP + H2O = GDP + phosphate + H(+). Its function is as follows. GTP hydrolase that promotes the GTP-dependent binding of aminoacyl-tRNA to the A-site of ribosomes during protein biosynthesis. This chain is Elongation factor Tu, found in Azoarcus sp. (strain BH72).